The sequence spans 241 residues: Phosphoadenosine 5'-phosphosulfate reductase (241 aa).

Cys-235 (nucleophile; cysteine thiosulfonate intermediate) is an active-site residue.

The protein belongs to the PAPS reductase family. CysH subfamily.

The protein resides in the cytoplasm. It catalyses the reaction [thioredoxin]-disulfide + sulfite + adenosine 3',5'-bisphosphate + 2 H(+) = [thioredoxin]-dithiol + 3'-phosphoadenylyl sulfate. Its pathway is sulfur metabolism; hydrogen sulfide biosynthesis; sulfite from sulfate: step 3/3. Catalyzes the formation of sulfite from phosphoadenosine 5'-phosphosulfate (PAPS) using thioredoxin as an electron donor. This chain is Phosphoadenosine 5'-phosphosulfate reductase, found in Xanthomonas euvesicatoria pv. vesicatoria (strain 85-10) (Xanthomonas campestris pv. vesicatoria).